The primary structure comprises 265 residues: Indole-3-glycerol phosphate synthase (265 aa).

Belongs to the TrpC family.

It carries out the reaction 1-(2-carboxyphenylamino)-1-deoxy-D-ribulose 5-phosphate + H(+) = (1S,2R)-1-C-(indol-3-yl)glycerol 3-phosphate + CO2 + H2O. The protein operates within amino-acid biosynthesis; L-tryptophan biosynthesis; L-tryptophan from chorismate: step 4/5. The sequence is that of Indole-3-glycerol phosphate synthase from Xanthomonas oryzae pv. oryzae (strain MAFF 311018).